A 382-amino-acid chain; its full sequence is Cysteine desulfurase IscS 1 (382 aa).

Asparagine 149 contacts pyridoxal 5'-phosphate. Cysteine 321 serves as the catalytic Cysteine persulfide intermediate. [2Fe-2S] cluster is bound at residue cysteine 321.

The protein belongs to the class-V pyridoxal-phosphate-dependent aminotransferase family. NifS/IscS subfamily. As to quaternary structure, homodimer. Forms a heterotetramer with IscU, interacts with other sulfur acceptors. It depends on pyridoxal 5'-phosphate as a cofactor.

It is found in the cytoplasm. It carries out the reaction (sulfur carrier)-H + L-cysteine = (sulfur carrier)-SH + L-alanine. It participates in cofactor biosynthesis; iron-sulfur cluster biosynthesis. Its function is as follows. Master enzyme that delivers sulfur to a number of partners involved in Fe-S cluster assembly, tRNA modification or cofactor biosynthesis. Catalyzes the removal of elemental sulfur atoms from cysteine to produce alanine. Functions as a sulfur delivery protein for Fe-S cluster synthesis onto IscU, an Fe-S scaffold assembly protein, as well as other S acceptor proteins. The polypeptide is Cysteine desulfurase IscS 1 (Archaeoglobus fulgidus (strain ATCC 49558 / DSM 4304 / JCM 9628 / NBRC 100126 / VC-16)).